The sequence spans 330 residues: Cyclin N-terminal domain-containing protein 1 (330 aa).

One can recognise a Cyclin N-terminal domain in the interval 27-178 (DALLHLAQQN…VLKSLNFRIN (152 aa)).

In terms of assembly, interacts with PRR19; this interaction promotes crossover formation. Interacts with RFC3 and RFC4; these interactions facilitate crossover formation. Interacts with CDC34; this interaction regulates the cell-cycle progression.

The protein resides in the nucleus. The protein localises to the cytoplasm. It is found in the chromosome. In terms of biological role, plays a role in the different steps of crossover formation during meiotic recombination. Participates in the crossover differentiation step of crossover-specific recombination intermediates through its interaction with PRR19. In addition, stimulates crossover formation through the interactions with RFC3 and RFC4 and simultaneously regulates cell-cycle progression through interactions with CDC34 and subsequent ubiquitination of WEE1. May also participates in an active deselection process that destabilizes or removes excess pre-CO intermediates. This chain is Cyclin N-terminal domain-containing protein 1, found in Homo sapiens (Human).